The sequence spans 226 residues: ATP synthase subunit a (226 aa).

A run of 6 helical transmembrane segments spans residues 18 to 38 (FITG…SLGA), 76 to 96 (YFPL…IGII), 105 to 125 (SWSF…FEGI), 134 to 154 (FAHF…IEII), 179 to 199 (LIML…VLFF), and 201 to 221 (GILQ…GAVL).

This sequence belongs to the ATPase A chain family. As to quaternary structure, F-type ATPases have 2 components, CF(1) - the catalytic core - and CF(0) - the membrane proton channel. CF(1) has five subunits: alpha(3), beta(3), gamma(1), delta(1), epsilon(1). CF(0) has three main subunits: a(1), b(2) and c(9-12). The alpha and beta chains form an alternating ring which encloses part of the gamma chain. CF(1) is attached to CF(0) by a central stalk formed by the gamma and epsilon chains, while a peripheral stalk is formed by the delta and b chains.

It is found in the cell inner membrane. In terms of biological role, key component of the proton channel; it plays a direct role in the translocation of protons across the membrane. This Helicobacter acinonychis (strain Sheeba) protein is ATP synthase subunit a.